The sequence spans 57 residues: Mambaquaretin-7 (57 aa).

Residues 5 to 55 form the BPTI/Kunitz inhibitor domain; it reads CELIVAAGPCMFFISAFYYSKGANKCYPFTYSGCRGNANRFKTIEECRRTC. Cystine bridges form between Cys-5-Cys-55, Cys-14-Cys-38, and Cys-30-Cys-51.

The protein belongs to the venom Kunitz-type family. As to expression, expressed by the venom gland.

Its subcellular location is the secreted. Its function is as follows. The mixture of mambaquaretin-7 and mambaquaretin-8 interacts with vasopressin V2 receptor (V2R/AVPR2), probably in a selective manner. This mixture inhibits vasopressin binding human V2R in the nanomolar range (Ki=3.14 nM), and also potently inhibits vasopressin-induced cAMP production (IC(50)=58 nM). In vivo, intraperitoneal injection of this protein into rats increases diuresis, without any loss of electrolytes. This Dendroaspis polylepis polylepis (Black mamba) protein is Mambaquaretin-7.